The chain runs to 144 residues: Peptide methionine sulfoxide reductase MsrB (144 aa).

Positions 5–128 (QEELRQRIGH…NSAALDFIPY (124 aa)) constitute a MsrB domain. The active-site Nucleophile is the Cys-117.

The protein belongs to the MsrB Met sulfoxide reductase family.

It carries out the reaction L-methionyl-[protein] + [thioredoxin]-disulfide + H2O = L-methionyl-(R)-S-oxide-[protein] + [thioredoxin]-dithiol. This Streptococcus agalactiae serotype Ia (strain ATCC 27591 / A909 / CDC SS700) protein is Peptide methionine sulfoxide reductase MsrB.